The following is an 838-amino-acid chain: Rho GTPase-activating protein 12 (838 aa).

An SH3 domain is found at 10-72 (AGQAYIEVEY…PAQYVKEVTR (63 aa)). Polar residues-rich tracts occupy residues 155–172 (GKFN…QNRT) and 189–198 (TSFSQEQSCD). The disordered stretch occupies residues 155–239 (GKFNSDSHSP…PPNQGRPDSP (85 aa)). The residue at position 163 (Ser163) is a Phosphoserine. 3 positions are modified to phosphoserine: Ser199, Ser211, and Ser213. Phosphothreonine is present on residues Thr228 and Thr229. Ser238 carries the phosphoserine modification. The residue at position 241 (Tyr241) is a Phosphotyrosine. The WW 1 domain occupies 263-296 (IQVNGEWETHKDSSGRCYYYNRTTQERTWKPPRW). Basic and acidic residues predominate over residues 291-302 (WKPPRWARDVST). Residues 291 to 346 (WKPPRWARDVSTSRDFQSPGEQEPLSSEENYHSSCFSQSDSQCGSPPRGWSEELDE) form a disordered region. Residues 303–334 (SRDFQSPGEQEPLSSEENYHSSCFSQSDSQCG) show a composition bias toward polar residues. In terms of domain architecture, WW 2 spans 355 to 388 (DYTKEKWLKHVDDQGRQYYYSADGSRSEWELPKY). The segment at 425 to 456 (DSNDKDSPTTTKLCLPENESPPTSSKHQDPGQ) is disordered. The PH domain occupies 466–567 (KITENGKKVR…WFKVLSSTIN (102 aa)). Over residues 572–582 (EADEAAEEETP) the composition is skewed to acidic residues. A disordered region spans residues 572–620 (EADEAAEEETPDSPGVEKHDKEKDQKELKKLRSMKGSSMDSSEQKKTKK). A Phosphoserine modification is found at Ser584. The span at 586–601 (GVEKHDKEKDQKELKK) shows a compositional bias: basic and acidic residues. The Rho-GAP domain occupies 648-836 (SNLANLCQRE…LILLELSTVF (189 aa)).

Its function is as follows. GTPase activator for the Rho-type GTPases by converting them to an inactive GDP-bound state. In Mus musculus (Mouse), this protein is Rho GTPase-activating protein 12 (Arhgap12).